We begin with the raw amino-acid sequence, 898 residues long: Protein SOV1, mitochondrial (898 aa).

Residues 1-31 (MFKYNRSLCSSALIAKSQIRFYRLKRAPLNY) constitute a mitochondrion transit peptide.

The protein localises to the mitochondrion. The sequence is that of Protein SOV1, mitochondrial (SOV1) from Saccharomyces cerevisiae (strain ATCC 204508 / S288c) (Baker's yeast).